Reading from the N-terminus, the 137-residue chain is Peptide methionine sulfoxide reductase MsrB (137 aa).

The MsrB domain occupies P7–D129. Zn(2+) contacts are provided by C46, C49, C95, and C98. C118 acts as the Nucleophile in catalysis.

Belongs to the MsrB Met sulfoxide reductase family. Zn(2+) is required as a cofactor.

The enzyme catalyses L-methionyl-[protein] + [thioredoxin]-disulfide + H2O = L-methionyl-(R)-S-oxide-[protein] + [thioredoxin]-dithiol. This chain is Peptide methionine sulfoxide reductase MsrB, found in Yersinia enterocolitica serotype O:8 / biotype 1B (strain NCTC 13174 / 8081).